Consider the following 455-residue polypeptide: Adhesin YadA (455 aa).

The first 25 residues, 1–25, serve as a signal peptide directing secretion; it reads MTKDFKISVSAALISALFSSPYAFA. The interval 26 to 363 is surface exposed passenger domain; it reads DDYDGIPNLT…KKAIRESNQY (338 aa). The stretch at 209–243 forms a coiled coil; sequence VNVAQLKKEIEKTQENTNKRSAELLANANAYADNK. The tract at residues 364 to 402 is outer membrane translocation of the passenger domain; the sequence is TDHKFRQLDNRLDKLDTRVDKGLASSAALNSLFQPYGVG. 4 beta stranded membrane passes run 402 to 412, 416 to 427, 434 to 440, and 444 to 455; these read GKVNFTAGVGG, SQALAIGSGYRV, KAGVAYA, and DVMYNASFNIEW. The tract at residues 403 to 455 is translocator domain; it reads KVNFTAGVGGYRSSQALAIGSGYRVNENVALKAGVAYAGSSDVMYNASFNIEW.

Belongs to the autotransporter-2 (AT-2) (TC 1.B.40) family. In terms of assembly, homotrimer; in gels migrates as monomers, dimers and homotrimers. Does not form trimers with distantly related EibA from E.coli; coexpression was lethal and one of the genes is eliminated in vivo. If the full translocator domain (368-455) is exchanged with that of EibA ('299-392'), will form heterotrimers with EibA and vice-versa.

The protein resides in the cell surface. Its subcellular location is the cell outer membrane. In terms of biological role, collagen-binding outer membrane protein forming a fibrillar matrix on the bacterial cell surface. Promotes initial attachment and invasion of eukaryotic cells. Also protects the bacteria by being responsible for agglutination, serum resistance, complement inactivation and phagocytosis resistance. In Yersinia enterocolitica, this protein is Adhesin YadA (yadA).